The sequence spans 197 residues: GTP cyclohydrolase-2 (197 aa).

49 to 53 (RVHSE) lines the GTP pocket. Zn(2+) contacts are provided by Cys-54, Cys-65, and Cys-67. Residues Gln-70, 92 to 94 (EGR), and Thr-114 contribute to the GTP site. The Proton acceptor role is filled by Asp-126. Arg-128 functions as the Nucleophile in the catalytic mechanism. Thr-149 and Lys-154 together coordinate GTP.

This sequence belongs to the GTP cyclohydrolase II family. Homodimer. Zn(2+) is required as a cofactor.

The catalysed reaction is GTP + 4 H2O = 2,5-diamino-6-hydroxy-4-(5-phosphoribosylamino)-pyrimidine + formate + 2 phosphate + 3 H(+). It functions in the pathway cofactor biosynthesis; riboflavin biosynthesis; 5-amino-6-(D-ribitylamino)uracil from GTP: step 1/4. In terms of biological role, catalyzes the conversion of GTP to 2,5-diamino-6-ribosylamino-4(3H)-pyrimidinone 5'-phosphate (DARP), formate and pyrophosphate. This chain is GTP cyclohydrolase-2, found in Pectobacterium atrosepticum (strain SCRI 1043 / ATCC BAA-672) (Erwinia carotovora subsp. atroseptica).